The sequence spans 60 residues: Protein YoaG (60 aa).

As to quaternary structure, homodimer.

The polypeptide is Protein YoaG (yoaG) (Escherichia coli O157:H7).